The following is a 363-amino-acid chain: Type-2 angiotensin II receptor (363 aa).

Residues 1–45 lie on the Extracellular side of the membrane; it reads MKDNFSFAATSRNITSSLPFVNLNMSGTNDLIFNCSHKPSDKHLE. N4, N13, N24, and N34 each carry an N-linked (GlcNAc...) asparagine glycan. 2 disulfide bridges follow: C35/C290 and C117/C195. The helical transmembrane segment at 46 to 70 threads the bilayer; it reads AIPVLYYLIFVIGFAVNIIVVSLFC. The Cytoplasmic segment spans residues 71–80; it reads CQKGPKKVSS. The helical transmembrane segment at 81–104 threads the bilayer; the sequence is IYIFNLAVADLLLLATLPLWATYY. The angiotensin II site is built by Y103 and Y104. Residues 105–114 are Extracellular-facing; it reads SYRYDWLFGP. A helical membrane pass occupies residues 115–140; it reads VMCKVFGSFLTLNMFASIFFITCMSV. The Cytoplasmic portion of the chain corresponds to 141–159; the sequence is DRYQSVIYPFLSQRRNPWQ. A helical membrane pass occupies residues 160–181; the sequence is ASYVVPLVWCMACLSSLPTFYF. The angiotensin II site is built by R182, Y204, and K215. The Extracellular segment spans residues 182–206; sequence RDVRTIEYLGVNACVMAFPPEKYAQ. Residues 207 to 232 traverse the membrane as a helical segment; the sequence is WSAGIALMKNVLGFIIPLIFIATCYF. Over 233–257 the chain is Cytoplasmic; the sequence is GIRKHLLKTNSYGKNRITRDQVLKM. The helical transmembrane segment at 258–281 threads the bilayer; sequence AAAVVLAFIICWLPFHVLTFLDAL. An angiotensin II-binding site is contributed by D279. Residues 282–294 are Extracellular-facing; the sequence is SWMGIINSCEVMA. The helical transmembrane segment at 295 to 320 threads the bilayer; that stretch reads VIDLALPFAILLGFTNSCVNPFLYCF. Position 297 (D297) interacts with angiotensin II. Residues 321–363 are Cytoplasmic-facing; that stretch reads VGNRFQQKLRSMFRVPITWLQGKRETMSCRKSSSLREMDTFVS. The helix VIII stretch occupies residues 324–333; sequence RFQQKLRSMF. Phosphoserine; by PKC is present on S354.

This sequence belongs to the G-protein coupled receptor 1 family. As to quaternary structure, interacts with MTUS1.

Its subcellular location is the cell membrane. Receptor for angiotensin II, a vasoconstricting peptide. Signals primarily via a non-canonical G-protein- and beta-arrestin independent pathways. Cooperates with MTUS1 to inhibit ERK2 activation and cell proliferation. The polypeptide is Type-2 angiotensin II receptor (AGTR2) (Meriones unguiculatus (Mongolian jird)).